The sequence spans 198 residues: Inosine triphosphate pyrophosphatase (198 aa).

N-acetylalanine is present on Ala-2. Thr-14–Lys-19 provides a ligand contact to ITP. Position 44 (Glu-44) interacts with Mg(2+). ITP-binding positions include Lys-56, Asp-72 to Thr-73, and Lys-89. Ser-146 bears the Phosphoserine mark. ITP-binding positions include Phe-149–Asp-152, Lys-172, and His-177–Arg-178.

The protein belongs to the HAM1 NTPase family. Homodimer. It depends on Mg(2+) as a cofactor. The cofactor is Mn(2+).

Its subcellular location is the cytoplasm. It carries out the reaction ITP + H2O = IMP + diphosphate + H(+). The catalysed reaction is dITP + H2O = dIMP + diphosphate + H(+). The enzyme catalyses XTP + H2O = XMP + diphosphate + H(+). It catalyses the reaction N(6)-hydroxy-dATP + H2O = N(6)-hydroxy-dAMP + diphosphate + H(+). Functionally, pyrophosphatase that hydrolyzes the non-canonical purine nucleotides inosine triphosphate (ITP), deoxyinosine triphosphate (dITP) as well as 2'-deoxy-N-6-hydroxylaminopurine triphosphate (dHAPTP) and xanthosine 5'-triphosphate (XTP) to their respective monophosphate derivatives. The enzyme does not distinguish between the deoxy- and ribose forms. Probably excludes non-canonical purines from RNA and DNA precursor pools, thus preventing their incorporation into RNA and DNA and avoiding chromosomal lesions. In Mus musculus (Mouse), this protein is Inosine triphosphate pyrophosphatase (Itpa).